Reading from the N-terminus, the 185-residue chain is Large ribosomal subunit protein uL15 (185 aa).

A disordered region spans residues 1-51; sequence MDLSSLRPAAGAVKNKKRVGRGQGSGNGTTAGKGNKGQQARSGYQKPINEG. Positions 21-35 are enriched in gly residues; it reads RGQGSGNGTTAGKGN.

It belongs to the universal ribosomal protein uL15 family. As to quaternary structure, part of the 50S ribosomal subunit.

In terms of biological role, binds to the 23S rRNA. The polypeptide is Large ribosomal subunit protein uL15 (Chlorobium phaeobacteroides (strain DSM 266 / SMG 266 / 2430)).